The chain runs to 261 residues: MEAAAEPLRSVRHLSRVLLFLSQCYILSGDGSLNLEHSQPLAQAIKDPGPTRTFSVVPRAAENQLFSHLTESTEIPPYMTKCPSNGLCSRLPADCIECATNVSCTYGKPVTFDCTVKPSVTCVDQDLKPQRNFVINMTCRFCWQLPETDYECSNSTTCMTVACPRQRYFANCTVRDHIHCLGNRTFPKLLYCNWTGGYKWSTALALSITLGGFGADRFYLGQWREGLGKLFSFGGLGIWTLIDVLLIGVGYVGPADGSLYI.

The signal sequence occupies residues 1-44; sequence MEAAAEPLRSVRHLSRVLLFLSQCYILSGDGSLNLEHSQPLAQA. Topologically, residues 45–193 are extracellular; sequence IKDPGPTRTF…RTFPKLLYCN (149 aa). N-linked (GlcNAc...) asparagine glycosylation is found at asparagine 101, asparagine 136, asparagine 154, asparagine 171, asparagine 183, and asparagine 193. Residues 194-214 traverse the membrane as a helical segment; the sequence is WTGGYKWSTALALSITLGGFG. One can recognise a TM2 domain in the interval 197-244; sequence GYKWSTALALSITLGGFGADRFYLGQWREGLGKLFSFGGLGIWTLIDV. The Cytoplasmic segment spans residues 215–229; it reads ADRFYLGQWREGLGK. The helical transmembrane segment at 230–250 threads the bilayer; that stretch reads LFSFGGLGIWTLIDVLLIGVG. The Extracellular segment spans residues 251-261; it reads YVGPADGSLYI.

Belongs to the TM2 family.

The protein localises to the membrane. The sequence is that of TM2 domain-containing protein 3 (Tm2d3) from Mus musculus (Mouse).